The following is a 473-amino-acid chain: MLQVYNTLTRNKETFKPLKEGEVSIYACGPTVYNMPHIGNYRTFLLADTVVRTLQYLGYKVKLVMNITDIDDKTIRDSKAAGMSLKDFTDKYSAEFFKGLDMLNIKRASAYPRATENVDGMIELAQKLIEKGLAYEKGGSVYYRISGFPDYGKLSKLDFDSIRIGASVDVDEYDKDNPRDFALLKASAPEEIERSIYYESPWGKIRPGWHIECSVMAMNSFGPTLDVHIGGVDLIFPHHENEIAQSEGATGIPFVRHWIHGEHLIVEGEKMSKSKGNVFTLPEIVEMYGGEVVRFMFLSVHYRKKLDYSETFAENAKNNYLKLKETLDNLEFALKNVEDEPGPGDLETLKTLPELENRFREALEDDFNTPKAITVFRELSRTANVYLETGKNMQVLEEIHALYKRFSDTLGIFAKAGGEEVPGEVVRLVEEREEARKIKDWKTSDAIREKIKSLGYIVQDTKEGPKIKKSEES.

Zn(2+) is bound at residue Cys28. Positions 30–40 (PTVYNMPHIGN) match the 'HIGH' region motif. Zn(2+) is bound by residues Cys213, His238, and Glu242. The short motif at 270 to 274 (KMSKS) is the 'KMSKS' region element. ATP is bound at residue Lys273.

Belongs to the class-I aminoacyl-tRNA synthetase family. It depends on Zn(2+) as a cofactor.

The protein localises to the cytoplasm. It carries out the reaction tRNA(Cys) + L-cysteine + ATP = L-cysteinyl-tRNA(Cys) + AMP + diphosphate. In Methanosarcina mazei (strain ATCC BAA-159 / DSM 3647 / Goe1 / Go1 / JCM 11833 / OCM 88) (Methanosarcina frisia), this protein is Cysteine--tRNA ligase.